The primary structure comprises 292 residues: Elongation factor Ts (292 aa).

The segment at 79 to 82 is involved in Mg(2+) ion dislocation from EF-Tu; that stretch reads TDFV.

This sequence belongs to the EF-Ts family.

It localises to the cytoplasm. Functionally, associates with the EF-Tu.GDP complex and induces the exchange of GDP to GTP. It remains bound to the aminoacyl-tRNA.EF-Tu.GTP complex up to the GTP hydrolysis stage on the ribosome. This chain is Elongation factor Ts, found in Malacoplasma penetrans (strain HF-2) (Mycoplasma penetrans).